The sequence spans 115 residues: Phosphoribosyl-ATP pyrophosphatase (115 aa).

The protein belongs to the PRA-PH family.

Its subcellular location is the cytoplasm. It carries out the reaction 1-(5-phospho-beta-D-ribosyl)-ATP + H2O = 1-(5-phospho-beta-D-ribosyl)-5'-AMP + diphosphate + H(+). The protein operates within amino-acid biosynthesis; L-histidine biosynthesis; L-histidine from 5-phospho-alpha-D-ribose 1-diphosphate: step 2/9. The protein is Phosphoribosyl-ATP pyrophosphatase of Saccharophagus degradans (strain 2-40 / ATCC 43961 / DSM 17024).